Consider the following 130-residue polypeptide: Small ribosomal subunit protein uS8 (130 aa).

Belongs to the universal ribosomal protein uS8 family. As to quaternary structure, part of the 30S ribosomal subunit. Contacts proteins S5 and S12.

In terms of biological role, one of the primary rRNA binding proteins, it binds directly to 16S rRNA central domain where it helps coordinate assembly of the platform of the 30S subunit. The chain is Small ribosomal subunit protein uS8 from Actinobacillus succinogenes (strain ATCC 55618 / DSM 22257 / CCUG 43843 / 130Z).